Consider the following 345-residue polypeptide: Anthranilate phosphoribosyltransferase (345 aa).

Residues Gly80, 83–84, Thr88, 90–93, 108–116, and Ser120 contribute to the 5-phospho-alpha-D-ribose 1-diphosphate site; these read GD, NIST, and KHGNRSVTS. Anthranilate is bound at residue Gly80. Residue Ser92 participates in Mg(2+) binding. Residue Asn111 coordinates anthranilate. Arg166 serves as a coordination point for anthranilate. Positions 229 and 230 each coordinate Mg(2+).

The protein belongs to the anthranilate phosphoribosyltransferase family. In terms of assembly, homodimer. Mg(2+) serves as cofactor.

It carries out the reaction N-(5-phospho-beta-D-ribosyl)anthranilate + diphosphate = 5-phospho-alpha-D-ribose 1-diphosphate + anthranilate. Its pathway is amino-acid biosynthesis; L-tryptophan biosynthesis; L-tryptophan from chorismate: step 2/5. In terms of biological role, catalyzes the transfer of the phosphoribosyl group of 5-phosphorylribose-1-pyrophosphate (PRPP) to anthranilate to yield N-(5'-phosphoribosyl)-anthranilate (PRA). The polypeptide is Anthranilate phosphoribosyltransferase (Chlorobium phaeobacteroides (strain BS1)).